A 447-amino-acid chain; its full sequence is Alpha-1,6-mannosyl-glycoprotein 2-beta-N-acetylglucosaminyltransferase (447 aa).

At 1–9 (MRFRIYKRK) the chain is on the cytoplasmic side. The helical; Signal-anchor for type II membrane protein transmembrane segment at 10–29 (VLILTLVVAACGFVLWSSNG) threads the bilayer. Topologically, residues 30 to 447 (RQRKNEALAP…ELCKSYRRLQ (418 aa)) are lumenal. Asn-69 and Asn-86 each carry an N-linked (GlcNAc...) asparagine glycan. Residues 123-127 (QVHNR) and Asp-154 contribute to the substrate site. Cys-196 and Cys-210 are disulfide-bonded. 229–233 (QTKHH) contributes to the substrate binding site. Asp-261 serves as a coordination point for Mn(2+). A disulfide bridge links Cys-283 with Cys-286. Substrate is bound at residue Arg-298. Disulfide bonds link Cys-334–Cys-357, Cys-339–Cys-440, and Cys-378–Cys-386. His-374 provides a ligand contact to Mn(2+).

This sequence belongs to the glycosyltransferase 16 (GT16) protein family. Homodimer. It depends on Mn(2+) as a cofactor.

The protein resides in the golgi apparatus membrane. It catalyses the reaction an N(4)-{beta-D-GlcNAc-(1-&gt;2)-alpha-D-Man-(1-&gt;3)-[alpha-D-Man-(1-&gt;6)]-beta-D-Man-(1-&gt;4)-beta-D-GlcNAc-(1-&gt;4)-beta-D-GlcNAc}-L-asparaginyl-[protein] + UDP-N-acetyl-alpha-D-glucosamine = N(4)-{beta-D-GlcNAc-(1-&gt;2)-alpha-D-Man-(1-&gt;3)-[beta-D-GlcNAc-(1-&gt;2)-alpha-D-Man-(1-&gt;6)]-beta-D-Man-(1-&gt;4)-beta-D-GlcNAc-(1-&gt;4)-beta-D-GlcNAc}-L-asparaginyl-[protein] + UDP + H(+). The protein operates within protein modification; protein glycosylation. Plays an essential role in protein N-glycosylation. Catalyzes the transfer of N-acetylglucosamine (GlcNAc) onto the free terminal mannose moiety in the core structure of the nascent N-linked glycan chain, giving rise to the second branch in complex glycans. The chain is Alpha-1,6-mannosyl-glycoprotein 2-beta-N-acetylglucosaminyltransferase (MGAT2) from Homo sapiens (Human).